The following is a 100-amino-acid chain: Co-chaperonin GroES (100 aa).

The protein belongs to the GroES chaperonin family. As to quaternary structure, heptamer of 7 subunits arranged in a ring. Interacts with the chaperonin GroEL.

The protein resides in the cytoplasm. Its function is as follows. Together with the chaperonin GroEL, plays an essential role in assisting protein folding. The GroEL-GroES system forms a nano-cage that allows encapsulation of the non-native substrate proteins and provides a physical environment optimized to promote and accelerate protein folding. GroES binds to the apical surface of the GroEL ring, thereby capping the opening of the GroEL channel. The chain is Co-chaperonin GroES from Mycolicibacterium vanbaalenii (strain DSM 7251 / JCM 13017 / BCRC 16820 / KCTC 9966 / NRRL B-24157 / PYR-1) (Mycobacterium vanbaalenii).